A 601-amino-acid polypeptide reads, in one-letter code: Pyranose 2-oxidase (601 aa).

At histidine 151 the chain carries Tele-8alpha-FAD histidine. Substrate is bound by residues glutamine 406 and histidine 408. Histidine 505 functions as the Proton acceptor in the catalytic mechanism. Residue asparagine 558 is part of the active site. The segment at 577–601 (KLGKKGSHSGNRDDGDVDTDTDDDA) is disordered. Positions 591 to 601 (GDVDTDTDDDA) are enriched in acidic residues.

Belongs to the GMC oxidoreductase family. Homotetramer. FAD is required as a cofactor.

It catalyses the reaction D-glucose + O2 = 2-dehydro-D-glucose + H2O2. Catalyzes the oxidation of various aldopyranoses and disaccharides on carbon-2 to the corresponding 2-keto sugars concomitant with the reduction of O(2) to H(2)O(2). In Emericella nidulans (strain FGSC A4 / ATCC 38163 / CBS 112.46 / NRRL 194 / M139) (Aspergillus nidulans), this protein is Pyranose 2-oxidase (p2ox).